The sequence spans 163 residues: MSNGPITRTVRQALILDLLEQNQVSSQMQLSELLKQRGVDITQGTLSRDLDELGAKKIRPNGGRAFYAVGTSEDAASSTTAGTREKLRKMLDDLLVSVDHSGNIAVLRTPPAGAPFLASFIDRVGMDEVVGTIAGDDTVFVLARDPMTGKELGEFLSQRRTSL.

This sequence belongs to the ArgR family.

It is found in the cytoplasm. Its pathway is amino-acid biosynthesis; L-arginine biosynthesis [regulation]. In terms of biological role, regulates arginine biosynthesis genes. This Corynebacterium diphtheriae (strain ATCC 700971 / NCTC 13129 / Biotype gravis) protein is Arginine repressor.